A 291-amino-acid chain; its full sequence is 4-hydroxybenzoate octaprenyltransferase (291 aa).

8 consecutive transmembrane segments (helical) span residues 23-43 (PIGT…AADG), 47-67 (PALV…GCAI), 98-118 (LAVA…LNAL), 139-159 (FFAI…PMAY), 171-191 (WLML…YAMV), 216-236 (IMLC…ALAL), 238-258 (AAYW…YTLL), and 267-287 (FFVF…AALA).

This sequence belongs to the UbiA prenyltransferase family. Mg(2+) is required as a cofactor.

It localises to the cell inner membrane. It carries out the reaction all-trans-octaprenyl diphosphate + 4-hydroxybenzoate = 4-hydroxy-3-(all-trans-octaprenyl)benzoate + diphosphate. Its pathway is cofactor biosynthesis; ubiquinone biosynthesis. Catalyzes the prenylation of para-hydroxybenzoate (PHB) with an all-trans polyprenyl group. Mediates the second step in the final reaction sequence of ubiquinone-8 (UQ-8) biosynthesis, which is the condensation of the polyisoprenoid side chain with PHB, generating the first membrane-bound Q intermediate 3-octaprenyl-4-hydroxybenzoate. The protein is 4-hydroxybenzoate octaprenyltransferase of Ralstonia nicotianae (strain ATCC BAA-1114 / GMI1000) (Ralstonia solanacearum).